The following is a 144-amino-acid chain: UPF0102 protein BMA2801 (144 aa).

The tract at residues 1–28 is disordered; that stretch reads MCHAREASPGTGEPEAAPRDNFPRAAGS.

The protein belongs to the UPF0102 family.

This is UPF0102 protein BMA2801 from Burkholderia mallei (strain ATCC 23344).